A 441-amino-acid polypeptide reads, in one-letter code: Rho-associated protein kinase 1 (441 aa).

Residues 1–99 are a coiled coil; it reads NSKSQMDKDY…RLEQEVNEHK (99 aa). The interval 114-353 is SHROOM3 binding; the sequence is EAKSVAMCEM…TLSRLEETNS (240 aa). The 67-residue stretch at 356–422 folds into the RhoBD domain; it reads TKDIELLRKE…LAEIMNRKDF (67 aa). A coiled-coil region spans residues 418–441; that stretch reads NRKDFKIDRKKANTQDLRKKKKKK.

It belongs to the protein kinase superfamily. AGC Ser/Thr protein kinase family. As to quaternary structure, homodimer. Interacts with RHOA (activated by GTP), RHOB, RHOC, GEM, MYLC2B, RHOE, PPP1R12A, LIMK1, LIMK2, TSG101, CHORDC1, DAPK3, PFN1, PTEN and JIP3. Interacts with FHOD1 in a Src-dependent manner. Interacts with ITGB1BP1 (via N-terminus and PTB domain). Interacts with SHROOM3. The cofactor is Mg(2+).

It localises to the cytoplasm. It is found in the golgi apparatus membrane. The protein localises to the cytoskeleton. The protein resides in the microtubule organizing center. Its subcellular location is the centrosome. It localises to the centriole. It is found in the cell projection. The protein localises to the bleb. The protein resides in the cell membrane. Its subcellular location is the lamellipodium. It localises to the ruffle. It catalyses the reaction L-seryl-[protein] + ATP = O-phospho-L-seryl-[protein] + ADP + H(+). The catalysed reaction is L-threonyl-[protein] + ATP = O-phospho-L-threonyl-[protein] + ADP + H(+). Activated by RHOA binding. Inhibited by Y-27632. Protein kinase which is a key regulator of the actin cytoskeleton and cell polarity. Involved in regulation of smooth muscle contraction, actin cytoskeleton organization, stress fiber and focal adhesion formation, neurite retraction, cell adhesion and motility via phosphorylation of DAPK3, GFAP, LIMK1, LIMK2, MYL9/MLC2, TPPP, PFN1 and PPP1R12A. Phosphorylates FHOD1 and acts synergistically with it to promote SRC-dependent non-apoptotic plasma membrane blebbing. Phosphorylates JIP3 and regulates the recruitment of JNK to JIP3 upon UVB-induced stress. Acts as a suppressor of inflammatory cell migration by regulating PTEN phosphorylation and stability. Acts as a negative regulator of VEGF-induced angiogenic endothelial cell activation. Required for centrosome positioning and centrosome-dependent exit from mitosis. Plays a role in terminal erythroid differentiation. Inhibits podocyte motility via regulation of actin cytoskeletal dynamics and phosphorylation of CFL1. Promotes keratinocyte terminal differentiation. Involved in osteoblast compaction through the fibronectin fibrillogenesis cell-mediated matrix assembly process, essential for osteoblast mineralization. May regulate closure of the eyelids and ventral body wall by inducing the assembly of actomyosin bundles. The chain is Rho-associated protein kinase 1 (ROCK1) from Bos taurus (Bovine).